The primary structure comprises 88 residues: Small ribosomal subunit protein uS15 (88 aa).

Belongs to the universal ribosomal protein uS15 family. Part of the 30S ribosomal subunit. Forms a bridge to the 50S subunit in the 70S ribosome, contacting the 23S rRNA.

Functionally, one of the primary rRNA binding proteins, it binds directly to 16S rRNA where it helps nucleate assembly of the platform of the 30S subunit by binding and bridging several RNA helices of the 16S rRNA. Its function is as follows. Forms an intersubunit bridge (bridge B4) with the 23S rRNA of the 50S subunit in the ribosome. The sequence is that of Small ribosomal subunit protein uS15 from Francisella tularensis subsp. tularensis (strain FSC 198).